A 445-amino-acid polypeptide reads, in one-letter code: Glucose-6-phosphate isomerase (445 aa).

Catalysis depends on Glu-284, which acts as the Proton donor. Residues His-305 and Lys-419 contribute to the active site.

Belongs to the GPI family.

It is found in the cytoplasm. It catalyses the reaction alpha-D-glucose 6-phosphate = beta-D-fructose 6-phosphate. It participates in carbohydrate biosynthesis; gluconeogenesis. The protein operates within carbohydrate degradation; glycolysis; D-glyceraldehyde 3-phosphate and glycerone phosphate from D-glucose: step 2/4. Catalyzes the reversible isomerization of glucose-6-phosphate to fructose-6-phosphate. In Leptospira borgpetersenii serovar Hardjo-bovis (strain JB197), this protein is Glucose-6-phosphate isomerase.